We begin with the raw amino-acid sequence, 270 residues long: Proteasome subunit alpha type-1 (270 aa).

The segment at 239–270 is disordered; it reads SMEAAEEAPAAEAESSSMQEEDKGTDAAPMDI. A compositionally biased stretch (low complexity) spans 245–256; the sequence is EAPAAEAESSSM.

Belongs to the peptidase T1A family. As to quaternary structure, the 26S proteasome consists of a 20S proteasome core and two 19S regulatory subunits. The 20S proteasome core is composed of 28 subunits that are arranged in four stacked rings, resulting in a barrel-shaped structure. The two end rings are each formed by seven alpha subunits, and the two central rings are each formed by seven beta subunits. The catalytic chamber with the active sites is on the inside of the barrel.

Its subcellular location is the cytoplasm. It localises to the nucleus. In terms of biological role, the proteasome is a multicatalytic proteinase complex which is characterized by its ability to cleave peptides with Arg, Phe, Tyr, Leu, and Glu adjacent to the leaving group at neutral or slightly basic pH. The proteasome has an ATP-dependent proteolytic activity. The polypeptide is Proteasome subunit alpha type-1 (PAF1) (Oryza sativa subsp. japonica (Rice)).